The sequence spans 734 residues: Subtilisin-like protease (734 aa).

The signal sequence occupies residues 1–20 (MTCICIFSIAFLLSFHLTTA). One can recognise an Inhibitor I9 domain in the interval 28-109 (TYIVHVDKPD…AKLEKVLTLH (82 aa)). The 478-residue stretch at 114 to 591 (PNFLGLYQNM…AGHVNPSKAS (478 aa)) folds into the Peptidase S8 domain. Residue Asp-141 is the Charge relay system of the active site. Asn-172 is a glycosylation site (N-linked (GlcNAc...) asparagine). The Charge relay system role is filled by His-199. Asn-222 and Asn-306 each carry an N-linked (GlcNAc...) asparagine glycan. The 86-residue stretch at 357-442 (PLVYPGTSDE…THVGYAAGEM (86 aa)) folds into the PA domain. N-linked (GlcNAc...) asparagine glycans are attached at residues Asn-448 and Asn-509. Ser-524 serves as the catalytic Charge relay system. Asn-652 carries N-linked (GlcNAc...) asparagine glycosylation.

This sequence belongs to the peptidase S8 family.

The protein localises to the secreted. The protein resides in the extracellular space. It localises to the apoplast. In terms of biological role, required for arbuscular mycorrhiza (AM) development during AM symbiosis with AM fungi (e.g. Glomeromycota intraradices). This chain is Subtilisin-like protease, found in Petunia hybrida (Petunia).